The sequence spans 247 residues: Segregation and condensation protein A (247 aa).

Belongs to the ScpA family. As to quaternary structure, component of a cohesin-like complex composed of ScpA, ScpB and the Smc homodimer, in which ScpA and ScpB bind to the head domain of Smc. The presence of the three proteins is required for the association of the complex with DNA.

It localises to the cytoplasm. Functionally, participates in chromosomal partition during cell division. May act via the formation of a condensin-like complex containing Smc and ScpB that pull DNA away from mid-cell into both cell halves. The chain is Segregation and condensation protein A from Bacillus cereus (strain AH187).